We begin with the raw amino-acid sequence, 123 residues long: Glutaredoxin-like protein (123 aa).

Residues 27-123 (INEVEESITN…GTLFNDLKKK (97 aa)) form the Glutaredoxin domain.

It belongs to the glutaredoxin family.

This Dictyostelium discoideum (Social amoeba) protein is Glutaredoxin-like protein (grxB).